The chain runs to 428 residues: Protein ECERIFERUM 26 (428 aa).

Residues 1-36 form a disordered region; it reads MGRSQEQGQGQGPVHSIRLSTVGATRPTETGTTHEP. The span at 21-36 shows a compositional bias: low complexity; that stretch reads TVGATRPTETGTTHEP.

Belongs to the plant acyltransferase family. As to expression, highly expressed in leaves.

The protein localises to the cytoplasm. It is found in the cytosol. In terms of biological role, involved in biosynthesis of the epicuticular wax. Plays a role in very-long-chain fatty acid (VLCFA) biosynthesis and is required for C30 fatty acid elongation in leaf. Despite its classification as a BAHD acyltransferase based on sequence homology, CER26 does not seem to share the catalytic mechanism of the members of the BAHD family. The sequence is that of Protein ECERIFERUM 26 (CER26) from Arabidopsis thaliana (Mouse-ear cress).